The following is a 501-amino-acid chain: MAINAQEISALIKQQIENFKPNFDVTETGVVTYIGDGIARAHGLENAMSGELLNFENGSYGMAQNLESTDVGIIILGDFTDIREGDTIRRTGKIMEVPVGESLIGRVVDPLGRPVDGLGEIHTDKTRPVEAPAPGVMQRKSVSEPLQTGLKAIDALVPIGRGQRELIIGDRQTGKTTIAIDTILNQKDQDMICIYVAIGQKESTVRTQVETLRQYGALDYTIVVTASASQPSPLLFLAPYAGVAMAEEFMYQGKHVLIVYDDLSKQAVAYRELSLLLRRPPGREAFPGDVFYLHSRLLERSAKVSDELGGGSITALPFIETQAGDISAYIATNVISITDGQIFLGDGLFNAGIRPAIDAGSSVSRVGGSAQIKAMKKVAGTLRIDLASYRELEAFTKFGSDLDAATQAKLNRGRRTVEVLKQPVHKPLPVEKQVTILYALTHGFLDTVPVDDIVRFEEEFHAFFDAQHPEILETIRDTKDLPEEAVLDAAITEFLNQSSFQ.

169-176 serves as a coordination point for ATP; sequence GDRQTGKT.

It belongs to the ATPase alpha/beta chains family. As to quaternary structure, F-type ATPases have 2 components, CF(1) - the catalytic core - and CF(0) - the membrane proton channel. CF(1) has five subunits: alpha(3), beta(3), gamma(1), delta(1), epsilon(1). CF(0) has three main subunits: a(1), b(2) and c(9-12). The alpha and beta chains form an alternating ring which encloses part of the gamma chain. CF(1) is attached to CF(0) by a central stalk formed by the gamma and epsilon chains, while a peripheral stalk is formed by the delta and b chains.

It localises to the cell membrane. It carries out the reaction ATP + H2O + 4 H(+)(in) = ADP + phosphate + 5 H(+)(out). Produces ATP from ADP in the presence of a proton gradient across the membrane. The alpha chain is a regulatory subunit. The chain is ATP synthase subunit alpha from Streptococcus pneumoniae (strain Hungary19A-6).